The sequence spans 524 residues: Alkaline phosphatase, tissue-nonspecific isozyme (524 aa).

A signal peptide spans 1–17 (MILPFLVLAIGTCLTNS). Position 60 (aspartate 60) interacts with Mg(2+). Zn(2+)-binding residues include aspartate 60 and serine 110. Serine 110 (phosphoserine intermediate) is an active-site residue. Serine 110 is modified (phosphoserine). A disulfide bond links cysteine 139 and cysteine 201. Asparagine 140 is a glycosylation site (N-linked (GlcNAc...) asparagine). Position 173 (threonine 173) interacts with Mg(2+). A glycan (N-linked (GlcNAc...) asparagine) is linked at asparagine 230. Position 235 (glutamate 235) interacts with Ca(2+). A glycan (N-linked (GlcNAc...) asparagine) is linked at asparagine 271. The Ca(2+) site is built by phenylalanine 290 and glutamate 291. Asparagine 303 carries an N-linked (GlcNAc...) asparagine glycan. Aspartate 306 serves as a coordination point for Ca(2+). Glutamate 332 lines the Mg(2+) pocket. Zn(2+)-binding residues include aspartate 337, histidine 341, aspartate 378, and histidine 379. An N-linked (GlcNAc...) asparagine glycan is attached at asparagine 430. Histidine 454 lines the Zn(2+) pocket. A disulfide bond links cysteine 489 and cysteine 497. Serine 501 is lipidated: GPI-anchor amidated serine. Positions 502–524 (SASSPSPGALLLPLALFPLRTLF) are cleaved as a propeptide — removed in mature form.

It belongs to the alkaline phosphatase family. As to quaternary structure, homodimer. Mg(2+) serves as cofactor. The cofactor is Zn(2+). It depends on Ca(2+) as a cofactor. In terms of processing, N-glycosylated.

The protein localises to the cell membrane. It is found in the extracellular vesicle membrane. It localises to the mitochondrion membrane. Its subcellular location is the mitochondrion intermembrane space. It carries out the reaction a phosphate monoester + H2O = an alcohol + phosphate. The catalysed reaction is diphosphate + H2O = 2 phosphate + H(+). The enzyme catalyses pyridoxal 5'-phosphate + H2O = pyridoxal + phosphate. It catalyses the reaction phosphoethanolamine + H2O = ethanolamine + phosphate. It carries out the reaction N-phosphocreatine + H2O = creatine + phosphate. The catalysed reaction is ATP + H2O = ADP + phosphate + H(+). The enzyme catalyses ADP + H2O = AMP + phosphate + H(+). It catalyses the reaction AMP + H2O = adenosine + phosphate. Its activity is regulated as follows. Phosphatase activity is specifically inhibited by 5-((5-chloro-2-methoxyphenyl)sulfonamido)nicotinamide (SBI-425). Its function is as follows. Alkaline phosphatase that metabolizes various phosphate compounds and plays a key role in skeletal mineralization and adaptive thermogenesis. Has broad substrate specificity and can hydrolyze a considerable variety of compounds: however, only a few substrates, such as diphosphate (inorganic pyrophosphate; PPi), pyridoxal 5'-phosphate (PLP) and N-phosphocreatine are natural substrates. Plays an essential role in skeletal and dental mineralization via its ability to hydrolyze extracellular diphosphate, a potent mineralization inhibitor, to phosphate: it thereby promotes hydroxyapatite crystal formation and increases inorganic phosphate concentration. Acts in a non-redundant manner with PHOSPHO1 in skeletal mineralization: while PHOSPHO1 mediates the initiation of hydroxyapatite crystallization in the matrix vesicles (MVs), ALPL/TNAP catalyzes the spread of hydroxyapatite crystallization in the extracellular matrix. Also promotes dephosphorylation of osteopontin (SSP1), an inhibitor of hydroxyapatite crystallization in its phosphorylated state; it is however unclear whether ALPL/TNAP mediates SSP1 dephosphorylation via a direct or indirect manner. Catalyzes dephosphorylation of PLP to pyridoxal (PL), the transportable form of vitamin B6, in order to provide a sufficient amount of PLP in the brain, an essential cofactor for enzymes catalyzing the synthesis of diverse neurotransmitters. Additionally, also able to mediate ATP degradation in a stepwise manner to adenosine, thereby regulating the availability of ligands for purinergic receptors. Also capable of dephosphorylating microbial products, such as lipopolysaccharides (LPS) as well as other phosphorylated small-molecules, such as poly-inosine:cytosine (poly I:C). Acts as a key regulator of adaptive thermogenesis as part of the futile creatine cycle: localizes to the mitochondria of thermogenic fat cells and acts by mediating hydrolysis of N-phosphocreatine to initiate a futile cycle of creatine dephosphorylation and phosphorylation. During the futile creatine cycle, creatine and N-phosphocreatine are in a futile cycle, which dissipates the high energy charge of N-phosphocreatine as heat without performing any mechanical or chemical work. This Rattus norvegicus (Rat) protein is Alkaline phosphatase, tissue-nonspecific isozyme (Alpl).